Consider the following 113-residue polypeptide: Large ribosomal subunit protein bL19 (113 aa).

This sequence belongs to the bacterial ribosomal protein bL19 family.

Functionally, this protein is located at the 30S-50S ribosomal subunit interface and may play a role in the structure and function of the aminoacyl-tRNA binding site. The chain is Large ribosomal subunit protein bL19 (rplS) from Mycobacterium bovis (strain ATCC BAA-935 / AF2122/97).